The primary structure comprises 977 residues: Myb-like protein I (977 aa).

The segment at 1-122 is disordered; it reads MMNNQSMVRY…QQQQQQLDKS (122 aa). Positions 21-39 are enriched in pro residues; sequence PSPPVYSPIYRSPPPPPQP. The segment covering 52-68 has biased composition (basic and acidic residues); it reads DNSHHQVMDNSDHEQQQ. Residues 75–118 are compositionally biased toward low complexity; it reads QQQQQQQHHHQQQQQQQHHQQQQQQHHQQQQQHHHQQQQQQQQQ. The 56-residue stretch at 167–222 folds into the HTH myb-type domain; it reads EKKKQSRYWTPEEHSRFIEALSKYGHKDVKSISQYVSTRNPTQVRTHAQKYFLRID. A DNA-binding region (H-T-H motif) is located at residues 195–218; the sequence is VKSISQYVSTRNPTQVRTHAQKYF. Disordered regions lie at residues 229–331, 422–516, 531–650, 738–853, and 872–960; these read LESK…SSPL, INNN…SSQP, NNNN…QQQM, LNSN…WPGP, and NYVP…GMNQ. A compositionally biased stretch (acidic residues) spans 241–252; that stretch reads KDDDWLREEYND. Polar residues predominate over residues 254–275; sequence GSPTQYSSCSNSPTTNSVANPF. 2 stretches are compositionally biased toward low complexity: residues 276–329 and 422–504; these read SNSL…GNSS and INNN…INNN. The segment covering 505-516 has biased composition (polar residues); sequence GPNSPNLLSSQP. A compositionally biased stretch (low complexity) spans 738-754; that stretch reads LNSNSGNSSPNISSING. Polar residues predominate over residues 783–797; it reads LSGSPSHSPAQSPHY. 2 stretches are compositionally biased toward low complexity: residues 798–848 and 887–943; these read NLNN…SHSI and SPHF…GSGS. The span at 944–960 shows a compositional bias: polar residues; sequence WHQYQATDSPTGWGMNQ.

The protein resides in the nucleus. This is Myb-like protein I (mybI) from Dictyostelium discoideum (Social amoeba).